Consider the following 452-residue polypeptide: Probable V-type proton ATPase subunit H (452 aa).

This sequence belongs to the V-ATPase H subunit family. As to quaternary structure, V-ATPase is a heteromultimeric enzyme composed of a peripheral catalytic V1 complex (components A to H) attached to an integral membrane V0 proton pore complex (components: a, c, c', c'' and d).

Functionally, subunit of the peripheral V1 complex of vacuolar ATPase. Subunit H activates the ATPase activity of the enzyme and couples ATPase activity to proton flow. Vacuolar ATPase is responsible for acidifying a variety of intracellular compartments in eukaryotic cells, thus providing most of the energy required for transport processes in the vacuolar system. This is Probable V-type proton ATPase subunit H from Oryza sativa subsp. japonica (Rice).